A 168-amino-acid chain; its full sequence is Protein-export protein SecB (168 aa).

Belongs to the SecB family. Homotetramer, a dimer of dimers. One homotetramer interacts with 1 SecA dimer.

The protein localises to the cytoplasm. In terms of biological role, one of the proteins required for the normal export of preproteins out of the cell cytoplasm. It is a molecular chaperone that binds to a subset of precursor proteins, maintaining them in a translocation-competent state. It also specifically binds to its receptor SecA. This Haemophilus influenzae (strain PittGG) protein is Protein-export protein SecB.